Here is an 815-residue protein sequence, read N- to C-terminus: Bifunctional purine biosynthetic protein purD (815 aa).

Residues 6-452 (NILVIGSGSR…YRKDIGQKAL (447 aa)) form a GARS region. Residues 113–343 (KDFMARNNIP…LFEIVLACIE (231 aa)) form the ATP-grasp domain. Residue 139–200 (IESLNYKIVL…EEFLDGEECS (62 aa)) participates in ATP binding. Mg(2+)-binding residues include Glu-313 and Asn-315. The segment at 469–801 (VSYSESGVDI…KVYKIGKIIN (333 aa)) is AIRS.

This sequence in the N-terminal section; belongs to the GARS family. It in the C-terminal section; belongs to the AIR synthase family. Mg(2+) serves as cofactor. The cofactor is Mn(2+).

The protein resides in the cytoplasm. The protein localises to the cytosol. The catalysed reaction is 5-phospho-beta-D-ribosylamine + glycine + ATP = N(1)-(5-phospho-beta-D-ribosyl)glycinamide + ADP + phosphate + H(+). The enzyme catalyses 2-formamido-N(1)-(5-O-phospho-beta-D-ribosyl)acetamidine + ATP = 5-amino-1-(5-phospho-beta-D-ribosyl)imidazole + ADP + phosphate + H(+). It functions in the pathway purine metabolism; IMP biosynthesis via de novo pathway; 5-amino-1-(5-phospho-D-ribosyl)imidazole from N(2)-formyl-N(1)-(5-phospho-D-ribosyl)glycinamide: step 2/2. The protein operates within purine metabolism; IMP biosynthesis via de novo pathway; N(1)-(5-phospho-D-ribosyl)glycinamide from 5-phospho-alpha-D-ribose 1-diphosphate: step 2/2. Catalyzes the second and fifth step in the 'de novo' purine biosynthesis pathway; contains phosphoribosylamine--glycine ligase (GARS) and phosphoribosylformylglycinamidine cyclo-ligase (AIRS) activities. In Dictyostelium discoideum (Social amoeba), this protein is Bifunctional purine biosynthetic protein purD (purD).